The following is a 547-amino-acid chain: Glucose-6-phosphate isomerase (547 aa).

The active-site Proton donor is Glu-351. Catalysis depends on residues His-382 and Lys-509.

Belongs to the GPI family.

The protein resides in the cytoplasm. It carries out the reaction alpha-D-glucose 6-phosphate = beta-D-fructose 6-phosphate. Its pathway is carbohydrate biosynthesis; gluconeogenesis. The protein operates within carbohydrate degradation; glycolysis; D-glyceraldehyde 3-phosphate and glycerone phosphate from D-glucose: step 2/4. Its function is as follows. Catalyzes the reversible isomerization of glucose-6-phosphate to fructose-6-phosphate. The sequence is that of Glucose-6-phosphate isomerase from Coxiella burnetii (strain Dugway 5J108-111).